A 301-amino-acid chain; its full sequence is Homoserine O-acetyltransferase (301 aa).

Cys-142 serves as the catalytic Acyl-thioester intermediate. Positions 163 and 192 each coordinate substrate. His-235 acts as the Proton acceptor in catalysis. The active site involves Glu-237. A substrate-binding site is contributed by Arg-249.

Belongs to the MetA family.

It localises to the cytoplasm. It catalyses the reaction L-homoserine + acetyl-CoA = O-acetyl-L-homoserine + CoA. It participates in amino-acid biosynthesis; L-methionine biosynthesis via de novo pathway; O-acetyl-L-homoserine from L-homoserine: step 1/1. Its function is as follows. Transfers an acetyl group from acetyl-CoA to L-homoserine, forming acetyl-L-homoserine. This Bacillus cereus (strain ZK / E33L) protein is Homoserine O-acetyltransferase.